We begin with the raw amino-acid sequence, 658 residues long: MTPGVRVSTDPEQVTFEDVVVGFSQEEWGQLKPAQRTLYRDVMLDTFRLLVSVGHWLPKPNVISLLEQEAELWAVESRLPQGVYPDLETRPKVKLSVLKQGISEEISNSVILVERFLWDGLWYCRGEDTEGHWEWSCESLESLAVPVAFTPVKTPVLEQWQRNGFGENISLNPDLPHQPMTPERQSPHTWGTRGKREKPDLNVLQKTCVKEKPYKCQECGKAFSHSSALIEHHRTHTGERPYECHECLKGFRNSSALTKHQRIHTGEKPYKCTQCGRTFNQIAPLIQHQRTHTGEKPYECSECGKSFSFRSSFSQHERTHTGEKPYECSECGKAFRQSIHLTQHLRIHTGEKPYQCGECGKAFSHSSSLTKHQRIHTGEKPYECHECGKAFTQITPLIQHQRTHTGEKPYECGECGKAFSQSTLLTEHRRIHTGEKPYGCNECGKTFSHSSSLSQHERTHTGEKPYECSQCGKAFRQSTHLTQHQRIHTGEKPYECNDCGKAFSHSSSLTKHQRIHTGEKPYECNQCGRAFSQLAPLIQHQRIHTGEKPYECNQCGRAFSQSSLLIEHQRIHTKEKPYGCNECGKSFSHSSSLSQHERTHTGEKPYECHDCGKSFRQSTHLTQHRRIHTGEKPYACRDCGKAFTHSSSLTKHQRTHTG.

A KRAB domain is found at 14–85 (VTFEDVVVGF…ESRLPQGVYP (72 aa)). A disordered region spans residues 171-196 (LNPDLPHQPMTPERQSPHTWGTRGKR). 16 consecutive C2H2-type zinc fingers follow at residues 214–236 (YKCQ…HRTH), 242–264 (YECH…QRIH), 270–292 (YKCT…QRTH), 298–320 (YECS…ERTH), 326–348 (YECS…LRIH), 354–376 (YQCG…QRIH), 382–404 (YECH…QRTH), 410–432 (YECG…RRIH), 438–460 (YGCN…ERTH), 466–488 (YECS…QRIH), 494–516 (YECN…QRIH), 522–544 (YECN…QRIH), 550–572 (YECN…QRIH), 578–600 (YGCN…ERTH), 606–628 (YECH…RRIH), and 634–656 (YACR…QRTH).

This sequence belongs to the krueppel C2H2-type zinc-finger protein family.

It is found in the nucleus. In terms of biological role, plays a role in the regulation of cell morphology and cytoskeletal organization. May be involved in transcriptional regulation. This chain is Zinc finger protein 135 (ZNF135), found in Homo sapiens (Human).